Consider the following 289-residue polypeptide: ATP synthase gamma chain (289 aa).

The protein belongs to the ATPase gamma chain family. In terms of assembly, F-type ATPases have 2 components, CF(1) - the catalytic core - and CF(0) - the membrane proton channel. CF(1) has five subunits: alpha(3), beta(3), gamma(1), delta(1), epsilon(1). CF(0) has three main subunits: a, b and c.

It is found in the cell inner membrane. In terms of biological role, produces ATP from ADP in the presence of a proton gradient across the membrane. The gamma chain is believed to be important in regulating ATPase activity and the flow of protons through the CF(0) complex. The chain is ATP synthase gamma chain from Mannheimia succiniciproducens (strain KCTC 0769BP / MBEL55E).